A 365-amino-acid chain; its full sequence is Ribosomal RNA large subunit methyltransferase M (365 aa).

Residues S194, 227–230 (CPGG), D246, D266, and D284 contribute to the S-adenosyl-L-methionine site. The active-site Proton acceptor is the K313.

The protein belongs to the class I-like SAM-binding methyltransferase superfamily. RNA methyltransferase RlmE family. RlmM subfamily. In terms of assembly, monomer.

Its subcellular location is the cytoplasm. It catalyses the reaction cytidine(2498) in 23S rRNA + S-adenosyl-L-methionine = 2'-O-methylcytidine(2498) in 23S rRNA + S-adenosyl-L-homocysteine + H(+). Its function is as follows. Catalyzes the 2'-O-methylation at nucleotide C2498 in 23S rRNA. The sequence is that of Ribosomal RNA large subunit methyltransferase M from Pasteurella multocida (strain Pm70).